The chain runs to 684 residues: Homoaconitase, mitochondrial (684 aa).

3 residues coordinate [4Fe-4S] cluster: C337, C397, and C400.

It belongs to the aconitase/IPM isomerase family. It depends on [4Fe-4S] cluster as a cofactor.

It localises to the mitochondrion. It catalyses the reaction (2R,3S)-homoisocitrate = cis-homoaconitate + H2O. It functions in the pathway amino-acid biosynthesis; L-lysine biosynthesis via AAA pathway; L-alpha-aminoadipate from 2-oxoglutarate: step 3/5. In terms of biological role, catalyzes the reversible hydration of cis-homoaconitate to (2R,3S)-homoisocitrate, a step in the alpha-aminoadipate pathway for lysine biosynthesis. In Candida albicans (strain SC5314 / ATCC MYA-2876) (Yeast), this protein is Homoaconitase, mitochondrial (LYS4).